Consider the following 704-residue polypeptide: UvrABC system protein C (704 aa).

The tract at residues 1 to 77 (MIHDPAEPPA…PAQAGAGPMA (77 aa)) is disordered. Positions 49–66 (VEEDDEARLPEVEDEPEA) are enriched in acidic residues. Positions 67-77 (EPAQAGAGPMA) are enriched in low complexity. The 79-residue stretch at 92–170 (TSPGVYRMLN…IKQLRPRFNV (79 aa)) folds into the GIY-YIG domain. The 36-residue stretch at 280–315 (RAVKELLAAEMEKASGELEFETAALYRDRLAALSAI) folds into the UVR domain.

This sequence belongs to the UvrC family. In terms of assembly, interacts with UvrB in an incision complex.

Its subcellular location is the cytoplasm. Its function is as follows. The UvrABC repair system catalyzes the recognition and processing of DNA lesions. UvrC both incises the 5' and 3' sides of the lesion. The N-terminal half is responsible for the 3' incision and the C-terminal half is responsible for the 5' incision. The sequence is that of UvrABC system protein C from Rhodopseudomonas palustris (strain ATCC BAA-98 / CGA009).